The following is a 931-amino-acid chain: Protocadherin gamma-A1 (931 aa).

Positions 1–28 (MKIQKKLTGCSRLMLLCLSLELLLEAGA) are cleaved as a signal peptide. Cadherin domains lie at 29 to 133 (GNIH…TPQF), 134 to 242 (QLEE…PPAF), 243 to 347 (TQAQ…APEV), 348 to 452 (TITS…SPVF), 453 to 562 (HQDS…APEI), and 570 to 682 (DGST…EPSA). Residues 29–692 (GNIHYSVPEE…KPNDSDLTLY (664 aa)) are Extracellular-facing. N265, N419, and N545 each carry an N-linked (GlcNAc...) asparagine glycan. N-linked (GlcNAc...) asparagine glycosylation occurs at N685. Residues 693–713 (LVVAAAAVSCVFLAFVIVLLA) form a helical membrane-spanning segment. At 714–931 (HRLRRWHKSR…KKKSGKKEKK (218 aa)) the chain is on the cytoplasmic side. Disordered regions lie at residues 801 to 840 (KKEPFSQQAPPNTDWRFSQAQRPGTSGSQNGDDTGTWPNN) and 901 to 931 (ATLTNAAGKRDGKAPAGGNGNKKKSGKKEKK). The segment covering 805–840 (FSQQAPPNTDWRFSQAQRPGTSGSQNGDDTGTWPNN) has biased composition (polar residues). Basic residues predominate over residues 921-931 (NKKKSGKKEKK).

It is found in the cell membrane. Its function is as follows. Potential calcium-dependent cell-adhesion protein. May be involved in the establishment and maintenance of specific neuronal connections in the brain. The polypeptide is Protocadherin gamma-A1 (PCDHGA1) (Homo sapiens (Human)).